Reading from the N-terminus, the 382-residue chain is Glycerate kinase (382 aa).

Belongs to the glycerate kinase type-1 family.

The enzyme catalyses (R)-glycerate + ATP = (2R)-3-phosphoglycerate + ADP + H(+). The protein is Glycerate kinase (glxK) of Bacillus subtilis (strain 168).